We begin with the raw amino-acid sequence, 233 residues long: 7-cyano-7-deazaguanine synthase (233 aa).

13–23 lines the ATP pocket; that stretch reads LSGGLDSTTCL. Residues cysteine 197, cysteine 206, cysteine 209, and cysteine 212 each contribute to the Zn(2+) site.

It belongs to the QueC family. The cofactor is Zn(2+).

It catalyses the reaction 7-carboxy-7-deazaguanine + NH4(+) + ATP = 7-cyano-7-deazaguanine + ADP + phosphate + H2O + H(+). Its pathway is purine metabolism; 7-cyano-7-deazaguanine biosynthesis. Functionally, catalyzes the ATP-dependent conversion of 7-carboxy-7-deazaguanine (CDG) to 7-cyano-7-deazaguanine (preQ(0)). In Anaeromyxobacter sp. (strain Fw109-5), this protein is 7-cyano-7-deazaguanine synthase.